The primary structure comprises 148 residues: Urease accessory protein UreE (148 aa).

This sequence belongs to the UreE family.

It localises to the cytoplasm. In terms of biological role, involved in urease metallocenter assembly. Binds nickel. Probably functions as a nickel donor during metallocenter assembly. The sequence is that of Urease accessory protein UreE from Lysinibacillus sphaericus (strain C3-41).